The sequence spans 288 residues: Protease HtpX homolog (288 aa).

A run of 2 helical transmembrane segments spans residues 7–27 (TAVL…MLGG) and 29–49 (QGML…YWFS). Histidine 131 contacts Zn(2+). Residue glutamate 132 is part of the active site. Histidine 135 contacts Zn(2+). Helical transmembrane passes span 141-161 (ILIS…ANFA) and 177-197 (IASL…QMSI). Glutamate 202 is a Zn(2+) binding site.

It belongs to the peptidase M48B family. The cofactor is Zn(2+).

The protein localises to the cell inner membrane. The sequence is that of Protease HtpX homolog from Polynucleobacter necessarius subsp. necessarius (strain STIR1).